The following is a 2554-amino-acid chain: Highly reducing polyketide synthase PKS6 (2554 aa).

The interval 1 to 48 (MGSLSAVPATNGNHAALNGSASTNGQHVNGSTHVNGNHSLNGSAQVNG) is disordered. Positions 8 to 48 (PATNGNHAALNGSASTNGQHVNGSTHVNGNHSLNGSAQVNG) are enriched in polar residues. The Ketosynthase family 3 (KS3) domain maps to 56-481 (LEPIAVVGMS…GTNAHVVVDA (426 aa)). Active-site for beta-ketoacyl synthase activity residues include Cys230, His367, and His407. The tract at residues 595–913 (VFSGQGAQYP…HYTGSLKRGE (319 aa)) is malonyl-CoA:ACP transacylase (MAT) domain. Positions 981–1119 (HELLGTLVHD…GLVQVILKSE (139 aa)) are N-terminal hotdog fold. The dehydratase (DH) domain stretch occupies residues 981–1281 (HELLGTLVHD…QAWGVVATKL (301 aa)). A PKS/mFAS DH domain is found at 981–1287 (HELLGTLVHD…ATKLPDVSIG (307 aa)). His1013 serves as the catalytic Proton acceptor; for dehydratase activity. The C-terminal hotdog fold stretch occupies residues 1137–1287 (AQHIPANQFY…ATKLPDVSIG (151 aa)). The active-site Proton donor; for dehydratase activity is Asp1200. Residues 1451-1556 (VEVGAGTGSA…KTMLRPGGKL (106 aa)) form a methyltransferase (CMet) domain region. The interval 1840–2153 (GVLDTIRWVD…AGKHTGKVIL (314 aa)) is enoyl reductase (ER) domain. The tract at residues 2177–2353 (ATYLVVGGLG…TAYAVNIGAI (177 aa)) is ketoreductase (KR) domain. The 78-residue stretch at 2457–2534 (EAQDIICDAI…ELAEIVTKGS (78 aa)) folds into the Carrier domain. An O-(pantetheine 4'-phosphoryl)serine modification is found at Ser2494.

The protein operates within secondary metabolite biosynthesis. Highly reducing polyketide synthase; part of the gene cluster that mediates the biosynthesis of the lipopeptide fusaristatin A. Fusaristatin A consists of a polyketide chain linked to three amino acid residues glutamine (Gln), dehydroalanine (dehydro-Ala), and beta-aminoisobutyric acid. The biosynthesis starts with formation of a linear polyketide chain by the highly reducing polyketide synthase PKS6. The gene cluster does not contain an acyl-CoA ligase or an acyl-transferase, and it is therefore predicted that the polyketide is transferred directly to the nonribosomal peptide synthetase NRPS7. Modules 1-3 from NRPS7 incorporate dehydro-Ala, Gln, and beta-aminoisobutyric acid in the compound, which is released by cyclization. The beta-aminoisobutyric acid units are most likely not freely available to the NRPS, but can be synthesized from thymine, which requires a dehydrogenase, a monooxygenase, and an aminotransferase. The fusaristatin A cluster contains a cytochrome P450 monooxygenase (FGSG_08207) and an aminotransferase (FGSG_17085), which theoretically can perform two of the enzymatic steps. The enzymes may however also be involved in biosynthesis of dehydroalanine or modification of the polyketide. The dehydro-Ala residue can be a result of cyclization, where serine is dehydrated. The last gene of the cluster encodes a protein with an A/B barrel domain found in variable enzymes, which hampers functional prediction. This is Highly reducing polyketide synthase PKS6 from Gibberella zeae (strain ATCC MYA-4620 / CBS 123657 / FGSC 9075 / NRRL 31084 / PH-1) (Wheat head blight fungus).